We begin with the raw amino-acid sequence, 327 residues long: GDP-mannose transporter (327 aa).

Over 1–4 (MESS) the chain is Cytoplasmic. A helical transmembrane segment spans residues 5–25 (LAAIANSGPISIFSYCVSSIL). Topologically, residues 26–36 (MTVTNKYVLSG) are lumenal. A helical transmembrane segment spans residues 37-57 (FSFNMNFLLLAVQSIVCIVTI). Residues 58–78 (GSLKSFGVITYRQFNKEEARK) lie on the Cytoplasmic side of the membrane. The chain crosses the membrane as a helical span at residues 79 to 93 (WSPIAVLLVIMIYTS). Residues 94–102 (SKALQYLSI) lie on the Lumenal side of the membrane. Residues 103 to 125 (PVYTIFKNLTIILIAYGEVLWFG) form a helical membrane-spanning segment. Residues 126–131 (GKVTTM) are Cytoplasmic-facing. A helical membrane pass occupies residues 132–149 (ALSSFLLMVFSSVVAWYG). Topologically, residues 150-163 (DEAVSGSGNESFIA) are lumenal. Asparagine 158 carries N-linked (GlcNAc...) asparagine glycosylation. Residues 164–184 (LYLGYFWMATNCFASAAFVLI) form a helical membrane-spanning segment. Residues 185-207 (MRKRIKLTNFKDFDTMYYNNLLS) are Cytoplasmic-facing. A helical transmembrane segment spans residues 208–228 (IPILLASSIIFEDWSAENLAV). Over 229–238 (NFPSDNRTAT) the chain is Lumenal. N-linked (GlcNAc...) asparagine glycosylation is present at asparagine 234. A helical transmembrane segment spans residues 239 to 259 (IAAMVLSGASSVGISYCSAWC). Residues 260–266 (VRVTSST) lie on the Cytoplasmic side of the membrane. Residues 267-289 (TYSMVGALNKLPIALSGLVFFPA) traverse the membrane as a helical segment. Residues 290-292 (AVN) are Lumenal-facing. Residues 293–312 (FWSVASIFVGFAAGLVYAVA) form a helical membrane-spanning segment. Topologically, residues 313–327 (KQRQQKENVSLPSSK) are cytoplasmic.

The protein belongs to the TPT transporter family. SLC35D subfamily. In terms of assembly, homooligomer.

It is found in the golgi apparatus membrane. Its subcellular location is the cytoplasmic vesicle membrane. The protein resides in the endoplasmic reticulum membrane. Functionally, involved in the import of GDP-mannose from the cytoplasm into the Golgi lumen. The protein is GDP-mannose transporter (VRG4) of Scheffersomyces stipitis (strain ATCC 58785 / CBS 6054 / NBRC 10063 / NRRL Y-11545) (Yeast).